The chain runs to 432 residues: Phytase AppA (432 aa).

Positions 1–22 (MKAILIPFLSLLIPLTPQSAFA) are cleaved as a signal peptide. Position 38 (Arg38) interacts with 1D-myo-inositol hexakisphosphate. Catalysis depends on His39, which acts as the Nucleophile. Residues 42 to 46 (RAPTK) and Arg114 contribute to the 1D-myo-inositol hexakisphosphate site. Intrachain disulfides connect Cys99–Cys130, Cys155–Cys430, Cys200–Cys210, and Cys404–Cys413. 1D-myo-inositol hexakisphosphate-binding positions include Arg289 and 325–327 (HDT). Asp326 (proton donor) is an active-site residue.

This sequence belongs to the histidine acid phosphatase family. Monomer.

It localises to the periplasm. The catalysed reaction is 1D-myo-inositol hexakisphosphate + H2O = 1D-myo-inositol 1,2,3,4,5-pentakisphosphate + phosphate. It carries out the reaction 1D-myo-inositol 1,2,3,4,5-pentakisphosphate + H2O = 1D-myo-inositol 2,3,4,5-tetrakisphosphate + phosphate. It catalyses the reaction 1D-myo-inositol 2,3,4,5-tetrakisphosphate + H2O = 1D-myo-inositol 2,4,5-triphosphate + phosphate. The enzyme catalyses 1D-myo-inositol 2,4,5-triphosphate + H2O = 1D-myo-inositol 2,5-bisphosphate + phosphate. The catalysed reaction is 1D-myo-inositol 2,5-bisphosphate + H2O = 1D-myo-inositol 2-phosphate + phosphate. It carries out the reaction GTP + H2O = GDP + phosphate + H(+). Contains three consecutive and one non-consecutive disulfide bonds and shows a strong dependence on DsbC for its full activity. Competitively inhibited by tartaric acid and by sodium fluorid. In terms of biological role, catalyzes the hydrolysis of phytate (or myo-inositol hexakisphosphate, an indigestible organic form of phosphorus that is found in many plant tissues) to myo-inositol and inorganic phosphate. Dephosphorylates phytate in a stereospecific way by sequential removal of phosphate groups to produce myo-inositol 2-monophosphate. Also shows phosphoanhydride phosphatase activity and hydrolyzes the distal phosphoryl residues of GTP, the 5'-beta-phosphoryl residue of the regulatory nucleotide ppGpp and tripolyphosphates. Does not split most phosphomonoesters with the exception of the synthetic substrate p-nitrophenyl phosphate (pNPP), 2,3-bisphosphoglycerate and fructose 1,6-bisphosphate. This chain is Phytase AppA, found in Escherichia coli (strain K12).